Reading from the N-terminus, the 415-residue chain is Zona pellucida-like domain-containing protein 1 (415 aa).

The signal sequence occupies residues 1–19 (MEQIWLLLLLTIRVLPGSA). Topologically, residues 20–372 (QFNGYNCDAN…PPFQLNAITS (353 aa)) are extracellular. The ZP domain maps to 43–320 (YCGVQAITMK…PICSHRERRD (278 aa)). 2 disulfide bridges follow: Cys44-Cys155 and Cys79-Cys104. 2 N-linked (GlcNAc...) asparagine glycosylation sites follow: Asn121 and Asn164. Cystine bridges form between Cys235–Cys296 and Cys255–Cys313. Residues 323 to 360 (RRTTWSPQSSSGSAVLSAGPIITRSDETPTNNSQLGSP) are disordered. Polar residues-rich tracts occupy residues 325 to 336 (TTWSPQSSSGSA) and 350 to 359 (TPTNNSQLGS). Residues 373–393 (ALISGMVILGVTSFSLLLCSL) form a helical membrane-spanning segment. Topologically, residues 394–415 (ALLHRKGPTSLVLNGIRNPVFD) are cytoplasmic.

Post-translationally, proteolytically cleaved before the transmembrane segment to yield the secreted form found in the extracellular matrix of the cupula. As to expression, detected in placenta, kidney, lung, pancreas and at very low level in other tissues.

It localises to the cytoplasmic vesicle membrane. The protein resides in the secreted. The protein localises to the extracellular space. Its subcellular location is the extracellular matrix. Functionally, glycoprotein which is a component of the gelatinous extracellular matrix in the cupulae of the vestibular organ. This Homo sapiens (Human) protein is Zona pellucida-like domain-containing protein 1 (ZPLD1).